The primary structure comprises 202 residues: dTTP/UTP pyrophosphatase (202 aa).

The active-site Proton acceptor is the Asp76.

The protein belongs to the Maf family. YhdE subfamily. Requires a divalent metal cation as cofactor.

It localises to the cytoplasm. It carries out the reaction dTTP + H2O = dTMP + diphosphate + H(+). It catalyses the reaction UTP + H2O = UMP + diphosphate + H(+). Nucleoside triphosphate pyrophosphatase that hydrolyzes dTTP and UTP. May have a dual role in cell division arrest and in preventing the incorporation of modified nucleotides into cellular nucleic acids. This Neisseria gonorrhoeae (strain ATCC 700825 / FA 1090) protein is dTTP/UTP pyrophosphatase.